The primary structure comprises 529 residues: Peptide chain release factor 3 (529 aa).

Positions 11-280 (SKRRTFAIIS…GLTEWAPAPK (270 aa)) constitute a tr-type G domain. GTP-binding positions include 20–27 (SHPDAGKT), 88–92 (DTPGH), and 142–145 (NKLD).

It belongs to the TRAFAC class translation factor GTPase superfamily. Classic translation factor GTPase family. PrfC subfamily.

Its subcellular location is the cytoplasm. Functionally, increases the formation of ribosomal termination complexes and stimulates activities of RF-1 and RF-2. It binds guanine nucleotides and has strong preference for UGA stop codons. It may interact directly with the ribosome. The stimulation of RF-1 and RF-2 is significantly reduced by GTP and GDP, but not by GMP. This Vibrio parahaemolyticus serotype O3:K6 (strain RIMD 2210633) protein is Peptide chain release factor 3.